A 266-amino-acid chain; its full sequence is Regulatory protein RecX (266 aa).

This sequence belongs to the RecX family.

The protein localises to the cytoplasm. Functionally, modulates RecA activity. This chain is Regulatory protein RecX, found in Enterococcus faecalis (strain ATCC 700802 / V583).